The primary structure comprises 118 residues: Large ribosomal subunit protein bL20 (118 aa).

This sequence belongs to the bacterial ribosomal protein bL20 family. As to quaternary structure, part of the 50S ribosomal subunit. Contacts proteins L13 and L21.

In terms of biological role, binds directly to 23S rRNA, probably serving to organize its structure. The protein is Large ribosomal subunit protein bL20 (rplT) of Deinococcus radiodurans (strain ATCC 13939 / DSM 20539 / JCM 16871 / CCUG 27074 / LMG 4051 / NBRC 15346 / NCIMB 9279 / VKM B-1422 / R1).